The primary structure comprises 391 residues: Yellow-related salivary protein ASP4 (391 aa).

An N-terminal signal peptide occupies residues 1–18 (MKIFLCIIAVVSLQGVVA). N-linked (GlcNAc...) asparagine glycosylation is present at N29.

It belongs to the major royal jelly protein family. Female salivary gland (at protein level).

Its subcellular location is the secreted. Functionally, probably modulates blood feeding of sand flies on vertebrate species by binding and sequestering different mediators involved in the host response. Binds biogenic amines. Binds serotonin and dopamine with high affinity. Binds adrenaline, octopamine and adrenaline with medium affinity. Binds histamine with low affinity. This Phlebotomus orientalis (Phlebotomine sand fly) protein is Yellow-related salivary protein ASP4.